Consider the following 220-residue polypeptide: Charged multivesicular body protein 2a (220 aa).

Residues 12-53 (EEMLRQNQRALNRAMRDLDRERQRLEQQEKKIIADIKKMAKQ) adopt a coiled-coil conformation. Residues 184 to 220 (ATGGSLSVAAGKKAEPQPTLADADADLEERLNNLRRD) form a disordered region. The MIT-interacting motif signature appears at 208 to 218 (ADLEERLNNLR). The span at 211 to 220 (EERLNNLRRD) shows a compositional bias: basic and acidic residues.

This sequence belongs to the SNF7 family. As to quaternary structure, probable core component of the endosomal sorting required for transport complex III (ESCRT-III). ESCRT-III components are thought to multimerize to form a flat lattice on the perimeter membrane of the endosome.

Its subcellular location is the late endosome membrane. The protein localises to the cytoplasm. In terms of biological role, probable core component of the endosomal sorting required for transport complex III (ESCRT-III) which is involved in multivesicular bodies (MVBs) formation and sorting of endosomal cargo proteins into MVBs. MVBs contain intraluminal vesicles (ILVs) that are generated by invagination and scission from the limiting membrane of the endosome and mostly are delivered to lysosomes enabling degradation of membrane proteins, such as stimulated growth factor receptors, lysosomal enzymes and lipids. The polypeptide is Charged multivesicular body protein 2a (chmp2a) (Danio rerio (Zebrafish)).